A 556-amino-acid chain; its full sequence is 5-aminolevulinate synthase, mitochondrial (556 aa).

The transit peptide at 1–46 directs the protein to the mitochondrion; the sequence is MDSLARQSAKICPFVSRVTSSMQQVQVLHKTNMSAMAQQCPVMRRA. The substrate site is built by Arg-105, Ser-218, and Lys-237. Residues Ser-270, His-298, and Thr-342 each coordinate pyridoxal 5'-phosphate. Lys-345 is an active-site residue. The residue at position 345 (Lys-345) is an N6-(pyridoxal phosphate)lysine. The pyridoxal 5'-phosphate site is built by Thr-374 and Ser-375. Thr-460 is a binding site for substrate.

The protein belongs to the class-II pyridoxal-phosphate-dependent aminotransferase family. Homodimer. Pyridoxal 5'-phosphate serves as cofactor.

The protein resides in the mitochondrion matrix. The enzyme catalyses succinyl-CoA + glycine + H(+) = 5-aminolevulinate + CO2 + CoA. It functions in the pathway porphyrin-containing compound metabolism; protoporphyrin-IX biosynthesis; 5-aminolevulinate from glycine: step 1/1. In terms of biological role, catalyzes the synthesis of 5-aminolevulinate (ALA) from succinyl-CoA and glycine, the first and rate-limiting step in heme biosynthesis. This Eremothecium gossypii (strain ATCC 10895 / CBS 109.51 / FGSC 9923 / NRRL Y-1056) (Yeast) protein is 5-aminolevulinate synthase, mitochondrial (HEM1).